The chain runs to 225 residues: uncharacterized protein (225 aa).

This is an uncharacterized protein from Ureaplasma parvum serovar 3 (strain ATCC 700970).